The following is a 424-amino-acid chain: Choline-phosphate cytidylyltransferase (424 aa).

Residues 1–70 (MANPTTGKSS…RKRRRLTKEF (70 aa)) form a disordered region. Positions 14–24 (KLSNSSLSNLF) are enriched in low complexity. Ser16 is modified (phosphoserine). The span at 35-44 (ETEEQDNEDK) shows a compositional bias: acidic residues. Over residues 45 to 55 (DESKNQDENKD) the composition is skewed to basic and acidic residues. The residue at position 59 (Thr59) is a Phosphothreonine. Residues 111–119 (VFDLFHLGH) and Lys149 each bind CTP. The substrate site is built by Lys149 and Trp178. CTP-binding positions include 195–196 (HD), Tyr200, and 223–227 (RTNGV). Phosphoserine is present on Ser346. Residues 348 to 424 (ATEFANEFTG…LTQKKKQSAN (77 aa)) are disordered. The segment covering 381 to 398 (NSNNTNTNSDSDSNTNST) has biased composition (low complexity). Ser401 is subject to Phosphoserine; by CK2.

The protein belongs to the cytidylyltransferase family.

The protein localises to the membrane. The catalysed reaction is phosphocholine + CTP + H(+) = CDP-choline + diphosphate. The protein operates within phospholipid metabolism; phosphatidylcholine biosynthesis; phosphatidylcholine from phosphocholine: step 1/2. Functionally, catalyzes the key rate-limiting step in the CDP-choline pathway for phosphatidylcholine biosynthesis. The sequence is that of Choline-phosphate cytidylyltransferase (PCT1) from Saccharomyces cerevisiae (strain ATCC 204508 / S288c) (Baker's yeast).